Reading from the N-terminus, the 149-residue chain is MASKSSCDLLLAAVLVSIFAAVAAVGSEDCTPWTATPITPLPSCRDYVEQQACRIETPGPPYLAKQQCCGELANIPQQCRCQALRFFMGRKSRPDQSGLMELPGCPREVQMDFVRILVTPGFCNLTTVHNTPYCLAMDEWQWNRQFCSS.

The N-terminal stretch at Met-1–Ala-24 is a signal peptide. N-linked (GlcNAc...) asparagine glycosylation is present at Asn-124.

This sequence belongs to the protease inhibitor I6 (cereal trypsin/alpha-amylase inhibitor) family. As to quaternary structure, heterotetramer of one CMa, one CMb and two CMd chains. In terms of processing, five disulfide bonds, which are essential for the inhibitor activity, are probably present. Post-translationally, exists both in a glycosylated and in an unglycosylated form. The glycosylated form is a potent allergen. As to expression, endosperm.

It is found in the secreted. Part of a complex with inhibitory activity, but CMb is inactive as a separate subunit. The polypeptide is Alpha-amylase/trypsin inhibitor CMb (IAT2) (Hordeum vulgare (Barley)).